A 314-amino-acid polypeptide reads, in one-letter code: Cytochrome c biogenesis protein CcsA (314 aa).

Helical transmembrane passes span 15-35, 48-68, 73-93, 102-122, 148-168, 216-236, 250-267, and 277-297; these read VSFI…ISLI, LITI…WIIS, ISNL…GQLL, IIPA…CFVL, VMLS…VLFI, SILV…IWAN, TWAF…HMRI, and ALLA…VNFL.

Belongs to the CcmF/CycK/Ccl1/NrfE/CcsA family. May interact with ccs1.

The protein localises to the cellular thylakoid membrane. Functionally, required during biogenesis of c-type cytochromes (cytochrome c6 and cytochrome f) at the step of heme attachment. In Prochlorococcus marinus subsp. pastoris (strain CCMP1986 / NIES-2087 / MED4), this protein is Cytochrome c biogenesis protein CcsA.